Here is an 89-residue protein sequence, read N- to C-terminus: Aminoacyl carrier protein 2 (89 aa).

A Carrier domain is found at 6–84 (INVQNRVLSV…AMERMILNQL (79 aa)). Ser-42 bears the O-(pantetheine 4'-phosphoryl)serine mark.

Post-translationally, 4'-phosphopantetheine is transferred from CoA to a specific serine of the apo-form of this carrier protein.

In terms of biological role, aminoacyl carrier protein. Can be charged with L-glycine via the formation of a thioester bond between the amino acid and the 4'-phosphopantetheinyl prosthetic group, catalyzed by the bll6282 ligase. This chain is Aminoacyl carrier protein 2, found in Bradyrhizobium diazoefficiens (strain JCM 10833 / BCRC 13528 / IAM 13628 / NBRC 14792 / USDA 110).